The sequence spans 113 residues: Large ribosomal subunit protein uL24 (113 aa).

This sequence belongs to the universal ribosomal protein uL24 family. As to quaternary structure, part of the 50S ribosomal subunit.

Its function is as follows. One of two assembly initiator proteins, it binds directly to the 5'-end of the 23S rRNA, where it nucleates assembly of the 50S subunit. Functionally, one of the proteins that surrounds the polypeptide exit tunnel on the outside of the subunit. The sequence is that of Large ribosomal subunit protein uL24 from Synechococcus elongatus (strain ATCC 33912 / PCC 7942 / FACHB-805) (Anacystis nidulans R2).